The following is a 60-amino-acid chain: Large ribosomal subunit protein bL33 (60 aa).

It belongs to the bacterial ribosomal protein bL33 family.

This chain is Large ribosomal subunit protein bL33, found in Christiangramia forsetii (strain DSM 17595 / CGMCC 1.15422 / KT0803) (Gramella forsetii).